The primary structure comprises 231 residues: Large ribosomal subunit protein uL1 (231 aa).

It belongs to the universal ribosomal protein uL1 family. In terms of assembly, part of the 50S ribosomal subunit.

Functionally, binds directly to 23S rRNA. The L1 stalk is quite mobile in the ribosome, and is involved in E site tRNA release. In terms of biological role, protein L1 is also a translational repressor protein, it controls the translation of the L11 operon by binding to its mRNA. This Staphylococcus haemolyticus (strain JCSC1435) protein is Large ribosomal subunit protein uL1.